The following is a 503-amino-acid chain: Glycerol kinase (503 aa).

Residue Thr-14 coordinates ADP. Positions 14, 15, and 16 each coordinate ATP. A sn-glycerol 3-phosphate-binding site is contributed by Thr-14. Position 18 (Arg-18) interacts with ADP. Sn-glycerol 3-phosphate is bound by residues Arg-84, Glu-85, Tyr-136, and Asp-246. Positions 84, 85, 136, 246, and 247 each coordinate glycerol. Positions 268 and 311 each coordinate ADP. Residues Thr-268, Gly-311, Gln-315, and Gly-412 each contribute to the ATP site. 2 residues coordinate ADP: Gly-412 and Asn-416.

It belongs to the FGGY kinase family. Homotetramer and homodimer (in equilibrium). Heterodimer with EIIA-Glc. Binds 1 zinc ion per glycerol kinase EIIA-Glc dimer. The zinc ion is important for dimerization.

The enzyme catalyses glycerol + ATP = sn-glycerol 3-phosphate + ADP + H(+). Its pathway is polyol metabolism; glycerol degradation via glycerol kinase pathway; sn-glycerol 3-phosphate from glycerol: step 1/1. With respect to regulation, activity of this regulatory enzyme is affected by several metabolites. Allosterically and non-competitively inhibited by fructose 1,6-bisphosphate (FBP) and unphosphorylated phosphocarrier protein EIIA-Glc (III-Glc), an integral component of the bacterial phosphotransferase (PTS) system. In terms of biological role, key enzyme in the regulation of glycerol uptake and metabolism. Catalyzes the phosphorylation of glycerol to yield sn-glycerol 3-phosphate. This chain is Glycerol kinase, found in Klebsiella pneumoniae (strain 342).